A 608-amino-acid polypeptide reads, in one-letter code: Chaperone protein DnaK (608 aa).

Threonine 174 is subject to Phosphothreonine; by autocatalysis. Basic and acidic residues predominate over residues 493 to 505; that stretch reads YEEEDRKRKESAE. 2 disordered regions span residues 493-514 and 577-608; these read YEEE…DSMV and GQAA…DDDK. Over residues 577 to 590 the composition is skewed to low complexity; it reads GQAAGANPGAQTTG. Over residues 599 to 608 the composition is skewed to basic and acidic residues; that stretch reads AEYKVVDDDK.

This sequence belongs to the heat shock protein 70 family.

Its function is as follows. Acts as a chaperone. The sequence is that of Chaperone protein DnaK from Acetivibrio thermocellus (strain ATCC 27405 / DSM 1237 / JCM 9322 / NBRC 103400 / NCIMB 10682 / NRRL B-4536 / VPI 7372) (Clostridium thermocellum).